The following is a 223-amino-acid chain: uncharacterized protein (223 aa).

To M.jannaschii MJ1453.

This is an uncharacterized protein from Methanothermobacter thermautotrophicus (strain ATCC 29096 / DSM 1053 / JCM 10044 / NBRC 100330 / Delta H) (Methanobacterium thermoautotrophicum).